The chain runs to 352 residues: Forkhead box protein D5 (352 aa).

Disordered stretches follow at residues 1–32 (MSLS…LGED) and 47–92 (HSEM…GKAK). Residues 20-32 (SDEEDEIDILGED) are compositionally biased toward acidic residues. A compositionally biased stretch (low complexity) spans 73–82 (ESEGGTSKDS). The segment at residues 97–191 (KPPYSYIALI…DNGSFLRRRK (95 aa)) is a DNA-binding region (fork-head).

Expression begins in the newly forming dorsal mesoderm and is maintained during gastrulation at the dorsal blastopore lip (Spemann organizer). At the early neurula stages, expressed in a row of cells along the dorsal midline that are destined to become the fllor plate of the neural tube. At late neurula, expressed within the anterior and posterior poles of the embryo. After neural closure, expression is detected only in the tailtip, the otic vesicle and at the midbrain/hindbrain boundary.

The protein resides in the nucleus. Functionally, transcriptional repressor. The polypeptide is Forkhead box protein D5 (Xenopus tropicalis (Western clawed frog)).